An 820-amino-acid polypeptide reads, in one-letter code: Probable ATP-dependent RNA helicase DDX23 (820 aa).

Residues methionine 1 to lysine 42 show a composition bias toward basic and acidic residues. The tract at residues methionine 1–serine 244 is disordered. A phosphoserine mark is found at serine 14 and serine 16. The span at aspartate 43 to serine 65 shows a compositional bias: basic residues. Positions lysine 66 to arginine 105 are enriched in basic and acidic residues. Serine 107 and serine 109 each carry phosphoserine. 3 stretches are compositionally biased toward basic and acidic residues: residues arginine 112–proline 137, leucine 147–asparagine 226, and glycine 233–serine 244. Positions arginine 391–arginine 419 match the Q motif motif. A Helicase ATP-binding domain is found at isoleucine 422–valine 627. Alanine 435–threonine 442 is an ATP binding site. Positions aspartate 549 to aspartate 552 match the DEAD box motif. Residues lysine 651–proline 799 form the Helicase C-terminal domain. Residues lysine 686 and lysine 811 each participate in a glycyl lysine isopeptide (Lys-Gly) (interchain with G-Cter in SUMO2) cross-link.

The protein belongs to the DEAD box helicase family. DDX23/PRP28 subfamily. As to quaternary structure, the phosphorylated form (by SRPK2) is a component of the U4/U6-U5 tri-snRNP complex composed of the U4, U6 and U5 snRNAs and at least PRPF3, PRPF4, PRPF6, PRPF8, PRPF31, SNRNP200, TXNL4A, WDR57, SNRNP40, DDX23, CD2BP2, PPIH, SNU13, EFTUD2, SART1 and USP39. Identified in the spliceosome C complex. Interacts with ERBB4. Interacts with ERCC6. In vitro phosphorylated by CLK1 and U1 snRNP-associated protein kinase. Phosphorylated by SRPK2 and this phosphorylation is required for its association with the tri-snRNP (U4/U6-U5 tri-small nuclear ribonucleoproteins) and subsequent spliceosomal B complex formation. May be phosphorylated by SRPK2 on Ser residues in the SR domain; the phosphorylation is required for the removal of inappropriate R-loops during transcription.

The protein resides in the nucleus. It localises to the chromosome. It catalyses the reaction ATP + H2O = ADP + phosphate + H(+). In terms of biological role, involved in pre-mRNA splicing and its phosphorylated form (by SRPK2) is required for spliceosomal B complex formation. Independently of its spliceosome formation function, required for the suppression of incorrect R-loops formed during transcription; R-loops are composed of a DNA:RNA hybrid and the associated non-template single-stranded DNA. The protein is Probable ATP-dependent RNA helicase DDX23 of Pongo abelii (Sumatran orangutan).